The primary structure comprises 320 residues: o-succinylbenzoate synthase (320 aa).

The active-site Proton donor is the Lys-133. Mg(2+) is bound by residues Asp-161, Glu-190, and Asp-213. Lys-235 (proton acceptor) is an active-site residue.

Belongs to the mandelate racemase/muconate lactonizing enzyme family. MenC type 1 subfamily. A divalent metal cation serves as cofactor.

The enzyme catalyses (1R,6R)-6-hydroxy-2-succinyl-cyclohexa-2,4-diene-1-carboxylate = 2-succinylbenzoate + H2O. The protein operates within quinol/quinone metabolism; 1,4-dihydroxy-2-naphthoate biosynthesis; 1,4-dihydroxy-2-naphthoate from chorismate: step 4/7. It participates in quinol/quinone metabolism; menaquinone biosynthesis. Converts 2-succinyl-6-hydroxy-2,4-cyclohexadiene-1-carboxylate (SHCHC) to 2-succinylbenzoate (OSB). In Escherichia coli O81 (strain ED1a), this protein is o-succinylbenzoate synthase.